The sequence spans 242 residues: Mannose-P-dolichol utilization defect 1 protein homolog (242 aa).

The 59-residue stretch at 37 to 95 (LSRGLGFAITLGSILLFVPQILKIQAARSAQGISAASQLLALVGAIGTASYSYRSGFVF) folds into the PQ-loop 1 domain. 7 helical membrane passes run 40–60 (GLGFAITLGSILLFVPQILKI), 68–88 (GISAASQLLALVGAIGTASYS), 98–118 (WGDSFFVAVQLVIIILQIFLF), 120–140 (GQTMLSVGFLGIVSAVAYGVV), 148–168 (TLTAVQTAGIPIVVVSKLLQI), 180–200 (LSLISVFLQFAGTLARVFTSV), and 207–227 (LLIVSYSTAAVLNGLIFAQFF). The PQ-loop 2 domain maps to 152-202 (VQTAGIPIVVVSKLLQISQNYRAQSTGQLSLISVFLQFAGTLARVFTSVQD).

The protein belongs to the MPDU1 (TC 2.A.43.3) family.

It localises to the membrane. This chain is Mannose-P-dolichol utilization defect 1 protein homolog, found in Caenorhabditis elegans.